A 413-amino-acid polypeptide reads, in one-letter code: 1-deoxy-D-xylulose 5-phosphate reductoisomerase (413 aa).

Positions 13, 14, 15, 16, 40, 41, and 127 each coordinate NADPH. Residue lysine 128 coordinates 1-deoxy-D-xylulose 5-phosphate. NADPH is bound at residue glutamate 129. Aspartate 153 contributes to the Mn(2+) binding site. 1-deoxy-D-xylulose 5-phosphate is bound by residues serine 154, glutamate 155, serine 184, and histidine 207. Glutamate 155 contacts Mn(2+). Glycine 213 serves as a coordination point for NADPH. 1-deoxy-D-xylulose 5-phosphate contacts are provided by serine 220, asparagine 225, lysine 226, and glutamate 229. A Mn(2+)-binding site is contributed by glutamate 229.

This sequence belongs to the DXR family. Mg(2+) is required as a cofactor. It depends on Mn(2+) as a cofactor.

It carries out the reaction 2-C-methyl-D-erythritol 4-phosphate + NADP(+) = 1-deoxy-D-xylulose 5-phosphate + NADPH + H(+). It participates in isoprenoid biosynthesis; isopentenyl diphosphate biosynthesis via DXP pathway; isopentenyl diphosphate from 1-deoxy-D-xylulose 5-phosphate: step 1/6. Its function is as follows. Catalyzes the NADPH-dependent rearrangement and reduction of 1-deoxy-D-xylulose-5-phosphate (DXP) to 2-C-methyl-D-erythritol 4-phosphate (MEP). The protein is 1-deoxy-D-xylulose 5-phosphate reductoisomerase of Nitrosomonas eutropha (strain DSM 101675 / C91 / Nm57).